The primary structure comprises 853 residues: Leucine--tRNA ligase (853 aa).

The 'HIGH' region motif lies at 42-52 (PYPSGNLHMGH). The short motif at 615-619 (KMSKS) is the 'KMSKS' region element. Residue K618 participates in ATP binding.

This sequence belongs to the class-I aminoacyl-tRNA synthetase family.

The protein localises to the cytoplasm. It catalyses the reaction tRNA(Leu) + L-leucine + ATP = L-leucyl-tRNA(Leu) + AMP + diphosphate. In Crocosphaera subtropica (strain ATCC 51142 / BH68) (Cyanothece sp. (strain ATCC 51142)), this protein is Leucine--tRNA ligase.